The following is a 102-amino-acid chain: Ribonuclease P protein component 1 (102 aa).

Belongs to the eukaryotic/archaeal RNase P protein component 1 family. As to quaternary structure, consists of a catalytic RNA component and at least 4-5 protein subunits.

Its subcellular location is the cytoplasm. It carries out the reaction Endonucleolytic cleavage of RNA, removing 5'-extranucleotides from tRNA precursor.. Its function is as follows. Part of ribonuclease P, a protein complex that generates mature tRNA molecules by cleaving their 5'-ends. The chain is Ribonuclease P protein component 1 from Archaeoglobus fulgidus (strain ATCC 49558 / DSM 4304 / JCM 9628 / NBRC 100126 / VC-16).